The following is a 351-amino-acid chain: Dihydroorotate dehydrogenase (quinone) (351 aa).

FMN contacts are provided by residues Ala-65–Lys-69 and Thr-89. Lys-69 is a binding site for substrate. Asn-114 to Phe-118 contributes to the substrate binding site. Residues Asn-150 and Asn-183 each coordinate FMN. Residue Asn-183 coordinates substrate. Ser-186 serves as the catalytic Nucleophile. Position 188 (Asn-188) interacts with substrate. Residues Lys-228 and Thr-256 each contribute to the FMN site. Asn-257–Thr-258 serves as a coordination point for substrate. Residues Gly-279, Gly-308, and Tyr-329 to Thr-330 contribute to the FMN site.

This sequence belongs to the dihydroorotate dehydrogenase family. Type 2 subfamily. In terms of assembly, monomer. Requires FMN as cofactor.

It is found in the cell membrane. It carries out the reaction (S)-dihydroorotate + a quinone = orotate + a quinol. The protein operates within pyrimidine metabolism; UMP biosynthesis via de novo pathway; orotate from (S)-dihydroorotate (quinone route): step 1/1. Catalyzes the conversion of dihydroorotate to orotate with quinone as electron acceptor. The protein is Dihydroorotate dehydrogenase (quinone) of Acidovorax ebreus (strain TPSY) (Diaphorobacter sp. (strain TPSY)).